A 151-amino-acid polypeptide reads, in one-letter code: S-ribosylhomocysteine lyase (151 aa).

Residues His-54, His-58, and Cys-121 each contribute to the Fe cation site.

Belongs to the LuxS family. As to quaternary structure, homodimer. It depends on Fe cation as a cofactor.

It carries out the reaction S-(5-deoxy-D-ribos-5-yl)-L-homocysteine = (S)-4,5-dihydroxypentane-2,3-dione + L-homocysteine. In terms of biological role, involved in the synthesis of autoinducer 2 (AI-2) which is secreted by bacteria and is used to communicate both the cell density and the metabolic potential of the environment. The regulation of gene expression in response to changes in cell density is called quorum sensing. Catalyzes the transformation of S-ribosylhomocysteine (RHC) to homocysteine (HC) and 4,5-dihydroxy-2,3-pentadione (DPD). The protein is S-ribosylhomocysteine lyase of Clostridioides difficile (strain 630) (Peptoclostridium difficile).